Consider the following 184-residue polypeptide: Holliday junction branch migration complex subunit RuvA (184 aa).

Residues 1 to 64 (MIRAIEGIIT…EDANLLYGFL (64 aa)) are domain I. The interval 65-144 (DTNEQKMFEM…SDESVPGYQN (80 aa)) is domain II. Residue Asn-144 is a region of interest, flexible linker. A domain III region spans residues 144–184 (NEALLALEALGFKREKIVKILPDLKSTSTSELVKEALKKLA).

Belongs to the RuvA family. Homotetramer. Forms an RuvA(8)-RuvB(12)-Holliday junction (HJ) complex. HJ DNA is sandwiched between 2 RuvA tetramers; dsDNA enters through RuvA and exits via RuvB. An RuvB hexamer assembles on each DNA strand where it exits the tetramer. Each RuvB hexamer is contacted by two RuvA subunits (via domain III) on 2 adjacent RuvB subunits; this complex drives branch migration. In the full resolvosome a probable DNA-RuvA(4)-RuvB(12)-RuvC(2) complex forms which resolves the HJ.

It localises to the cytoplasm. In terms of biological role, the RuvA-RuvB-RuvC complex processes Holliday junction (HJ) DNA during genetic recombination and DNA repair, while the RuvA-RuvB complex plays an important role in the rescue of blocked DNA replication forks via replication fork reversal (RFR). RuvA specifically binds to HJ cruciform DNA, conferring on it an open structure. The RuvB hexamer acts as an ATP-dependent pump, pulling dsDNA into and through the RuvAB complex. HJ branch migration allows RuvC to scan DNA until it finds its consensus sequence, where it cleaves and resolves the cruciform DNA. The chain is Holliday junction branch migration complex subunit RuvA from Campylobacter curvus (strain 525.92).